The primary structure comprises 91 residues: Small ribosomal subunit protein uS15 (91 aa).

This sequence belongs to the universal ribosomal protein uS15 family. In terms of assembly, part of the 30S ribosomal subunit. Forms a bridge to the 50S subunit in the 70S ribosome, contacting the 23S rRNA.

Its function is as follows. One of the primary rRNA binding proteins, it binds directly to 16S rRNA where it helps nucleate assembly of the platform of the 30S subunit by binding and bridging several RNA helices of the 16S rRNA. Functionally, forms an intersubunit bridge (bridge B4) with the 23S rRNA of the 50S subunit in the ribosome. The protein is Small ribosomal subunit protein uS15 of Hydrogenobaculum sp. (strain Y04AAS1).